A 290-amino-acid chain; its full sequence is Enoyl-CoA hydratase, mitochondrial (290 aa).

The transit peptide at methionine 1 to phenylalanine 27 directs the protein to the mitochondrion. Residues alanine 98–lysine 101 and glycine 141 contribute to the substrate site. Lysine 101 is subject to N6-acetyllysine; alternate. At lysine 101 the chain carries N6-succinyllysine; alternate. Lysine 204 bears the N6-succinyllysine mark. N6-acetyllysine is present on lysine 211.

It belongs to the enoyl-CoA hydratase/isomerase family. In terms of assembly, homohexamer; dimer of trimers.

Its subcellular location is the mitochondrion matrix. The catalysed reaction is a (3S)-3-hydroxyacyl-CoA = a (2E)-enoyl-CoA + H2O. It catalyses the reaction a (3E)-enoyl-CoA = a 4-saturated (2E)-enoyl-CoA. The enzyme catalyses (3E)-hexenoyl-CoA = (2E)-hexenoyl-CoA. It carries out the reaction (3S)-3-hydroxybutanoyl-CoA = (2E)-butenoyl-CoA + H2O. The catalysed reaction is 3-hydroxyisovaleryl-CoA = 3-methylbut-2-enoyl-CoA + H2O. It catalyses the reaction 3-hydroxypropanoyl-CoA = acryloyl-CoA + H2O. The enzyme catalyses 3-hydroxybutanoyl-CoA = (2E)-butenoyl-CoA + H2O. It carries out the reaction 2-methylpropenoyl-CoA + H2O = (S)-3-hydroxyisobutanoyl-CoA. The catalysed reaction is (3S)-hydroxyhexanoyl-CoA = (2E)-hexenoyl-CoA + H2O. It catalyses the reaction (3S)-hydroxydecanoyl-CoA = (2E)-decenoyl-CoA + H2O. The protein operates within lipid metabolism; fatty acid beta-oxidation. Converts unsaturated trans-2-enoyl-CoA species ((2E)-enoyl-CoA) to the corresponding 3(S)-3-hydroxyacyl-CoA species through addition of a water molecule to the double bond. Catalyzes the hydration of medium- and short-chained fatty enoyl-CoA thioesters from 4 carbons long (C4) up to C16. Has high substrate specificity for crotonyl-CoA ((2E)-butenoyl-CoA) and moderate specificity for acryloyl-CoA, 3-methylcrotonyl-CoA (3-methyl-(2E)-butenoyl-CoA) and methacrylyl-CoA ((2E)-2-methylpropenoyl-CoA). Can bind tiglyl-CoA (2-methylcrotonoyl-CoA), but hydrates only a small amount of this substrate. Plays a key role in the beta-oxidation spiral of short- and medium-chain fatty acid oxidation. At a lower rate than the hydratase reaction, catalyzes the isomerase reaction of trans-3-enoyl-CoA species (such as (3E)-hexenoyl-CoA) to trans-2-enoyl-CoA species (such as (2E)-hexenoyl-CoA), which are subsequently hydrated to 3(S)-3-hydroxyacyl-CoA species (such as (3S)-hydroxyhexanoyl-CoA). In Bos taurus (Bovine), this protein is Enoyl-CoA hydratase, mitochondrial (ECHS1).